Consider the following 785-residue polypeptide: Cadherin-7 (785 aa).

An N-terminal signal peptide occupies residues 1-27 (MKLGKVELCRFLQLIALFLCFSGMNQA). Residues 28-47 (ELPRSRSKPYFQLGRSRTKR) constitute a propeptide that is removed on maturation. The Extracellular portion of the chain corresponds to 28 to 607 (ELPRSRSKPY…AYILPAGLST (580 aa)). 5 Cadherin domains span residues 49-153 (WVWN…EPKF), 154-262 (LDGP…PPRF), 263-377 (PRRS…PPVF), 378-482 (SSPL…APEF), and 482-599 (FAMD…AEAY). N-linked (GlcNAc...) asparagine glycosylation is found at asparagine 449 and asparagine 530. A helical membrane pass occupies residues 608–628 (GALIAILACVLTLLVLILLIV). The Cytoplasmic segment spans residues 629 to 785 (TMKRRKKEPL…YGNGQESLYS (157 aa)).

Its subcellular location is the cell membrane. In terms of biological role, cadherins are calcium-dependent cell adhesion proteins. They preferentially interact with themselves in a homophilic manner in connecting cells; cadherins may thus contribute to the sorting of heterogeneous cell types. This is Cadherin-7 (Cdh7) from Rattus norvegicus (Rat).